The following is a 211-amino-acid chain: 5,6-dimethylbenzimidazole synthase (211 aa).

FMN-binding positions include 22–26 (RRDVR), Ser50, Leu99, and Ser158.

This sequence belongs to the BluB family. In terms of assembly, homooctamer.

The enzyme catalyses FMNH2 + O2 = dialurate + 5,6-dimethylbenzimidazole + D-erythrose 4-phosphate + H(+). Its function is as follows. Involved in the biosynthesis of cobalamin (vitamin B12). Catalyzes the oxidative fragmentation and contraction of the isoalloxazine heterocycle and the cleavage of the ribityl tail of FMNH(2) to form 5,6-dimethylbenzimidazole (DMB) and D-erythrose 4-phosphate (E4P). NAD(P)H is only required initially to reduce FMN and oxygen drives the oxidative fragmentation. The polypeptide is 5,6-dimethylbenzimidazole synthase (Rhodospirillum rubrum (strain ATCC 11170 / ATH 1.1.1 / DSM 467 / LMG 4362 / NCIMB 8255 / S1)).